The sequence spans 388 residues: LL-diaminopimelate aminotransferase (388 aa).

The substrate site is built by Tyr-13, Gly-38, Lys-102, Tyr-126, and Asn-176. Residues 101-102 (SK), Tyr-126, Asn-176, Tyr-207, and 235-237 (SLS) each bind pyridoxal 5'-phosphate. Residue Lys-238 is modified to N6-(pyridoxal phosphate)lysine. Residue Arg-246 participates in pyridoxal 5'-phosphate binding. Arg-364 contributes to the substrate binding site.

Belongs to the class-I pyridoxal-phosphate-dependent aminotransferase family. LL-diaminopimelate aminotransferase subfamily. As to quaternary structure, homodimer. Requires pyridoxal 5'-phosphate as cofactor.

It carries out the reaction (2S,6S)-2,6-diaminopimelate + 2-oxoglutarate = (S)-2,3,4,5-tetrahydrodipicolinate + L-glutamate + H2O + H(+). It participates in amino-acid biosynthesis; L-lysine biosynthesis via DAP pathway; LL-2,6-diaminopimelate from (S)-tetrahydrodipicolinate (aminotransferase route): step 1/1. Functionally, involved in the synthesis of meso-diaminopimelate (m-DAP or DL-DAP), required for both lysine and peptidoglycan biosynthesis. Catalyzes the direct conversion of tetrahydrodipicolinate to LL-diaminopimelate. In Dehalococcoides mccartyi (strain ATCC BAA-2266 / KCTC 15142 / 195) (Dehalococcoides ethenogenes (strain 195)), this protein is LL-diaminopimelate aminotransferase.